The primary structure comprises 166 residues: Phosphopantetheine adenylyltransferase (166 aa).

Residue S11 coordinates substrate. ATP-binding positions include 11–12 (SF) and H19. Substrate is bound by residues K43, A76, and R90. ATP is bound by residues 91–93 (GLR), E101, and 126–132 (LQPISSS).

This sequence belongs to the bacterial CoaD family. In terms of assembly, homohexamer. Requires Mg(2+) as cofactor.

The protein localises to the cytoplasm. It carries out the reaction (R)-4'-phosphopantetheine + ATP + H(+) = 3'-dephospho-CoA + diphosphate. It participates in cofactor biosynthesis; coenzyme A biosynthesis; CoA from (R)-pantothenate: step 4/5. Functionally, reversibly transfers an adenylyl group from ATP to 4'-phosphopantetheine, yielding dephospho-CoA (dPCoA) and pyrophosphate. This chain is Phosphopantetheine adenylyltransferase, found in Streptococcus equi subsp. zooepidemicus (strain H70).